We begin with the raw amino-acid sequence, 205 residues long: MANTLYDRTIAFAGICQAVALVQQVARDGHCDQDAFETSINAILNTSPANTIGVFGREADLKLGLECLVKGIDSTPSGSEVTRYIISLMALERKLSGRNDAMSQLGDRIQMAQRQTEHFELLDDQMISNLASIYLDVVSPIGPRIQVTGTPSVLQQTSNQHKVRALLLSGIRSAVLWRQVGGKRRHLIFGRKKMVEQAQILLARM.

It belongs to the HflD family.

It is found in the cytoplasm. The protein localises to the cell inner membrane. The chain is High frequency lysogenization protein HflD homolog from Vibrio campbellii (strain ATCC BAA-1116).